The chain runs to 352 residues: Mitochondrial adenine nucleotide transporter ADNT1 (352 aa).

3 Solcar repeats span residues 36 to 123 (KSIC…ASNG), 139 to 227 (LTPL…LKDW), and 242 to 343 (LTVV…VKDV). Helical transmembrane passes span 41–61 (SLFA…PLER), 100–120 (GTNC…YEQA), 145–162 (LGAG…TYPM), 202–221 (GWLP…FSVY), 242–263 (LTVV…TIAY), and 324–340 (VKVV…YEMV).

It belongs to the mitochondrial carrier (TC 2.A.29) family. Expressed in seedling radicles and roots, vasculature of cotyledons, leaf primordia, leaves and sepals.

It localises to the mitochondrion inner membrane. Inhibited by pyridoxal 5-phosphate, bathophenanthroline, mersalyl, p-hydroxymercuribenzoate and tannic acid. In terms of biological role, mitochondrial adenylate carrier that catalyzes specifically the transport of ATP, ADP and AMP by a counter-exchange mechanism across the inner mitochondrial membrane. Substrate preference in reconstituted proteoliposomes is ATP &gt; AMP &gt; ADP. May play a role in oxidative phosphorylation and be important for the provision of energy required to support growth in heterotrophic tissues. In Arabidopsis thaliana (Mouse-ear cress), this protein is Mitochondrial adenine nucleotide transporter ADNT1 (ADNT1).